A 193-amino-acid polypeptide reads, in one-letter code: Xanthine phosphoribosyltransferase (193 aa).

Residues leucine 20 and threonine 27 each contribute to the xanthine site. 128–132 (ANGQA) provides a ligand contact to 5-phospho-alpha-D-ribose 1-diphosphate. Lysine 156 provides a ligand contact to xanthine.

The protein belongs to the purine/pyrimidine phosphoribosyltransferase family. Xpt subfamily. As to quaternary structure, homodimer.

The protein resides in the cytoplasm. It catalyses the reaction XMP + diphosphate = xanthine + 5-phospho-alpha-D-ribose 1-diphosphate. It participates in purine metabolism; XMP biosynthesis via salvage pathway; XMP from xanthine: step 1/1. Its function is as follows. Converts the preformed base xanthine, a product of nucleic acid breakdown, to xanthosine 5'-monophosphate (XMP), so it can be reused for RNA or DNA synthesis. The polypeptide is Xanthine phosphoribosyltransferase (Streptococcus gordonii (strain Challis / ATCC 35105 / BCRC 15272 / CH1 / DL1 / V288)).